Reading from the N-terminus, the 119-residue chain is Large ribosomal subunit protein uL18 (119 aa).

Belongs to the universal ribosomal protein uL18 family. Part of the 50S ribosomal subunit; part of the 5S rRNA/L5/L18/L25 subcomplex. Contacts the 5S and 23S rRNAs.

In terms of biological role, this is one of the proteins that bind and probably mediate the attachment of the 5S RNA into the large ribosomal subunit, where it forms part of the central protuberance. The sequence is that of Large ribosomal subunit protein uL18 from Clostridium botulinum (strain Alaska E43 / Type E3).